The following is a 104-amino-acid chain: MKDSEFHALVEGRYQFIEQAIDNCDTDIDCELNSGVVTLTFVNGSKIIINKQEPLHQIWVATRENGYHFDWKDGKWIDNRGGRELIELLSDACSKQSGEKVTLG.

The protein belongs to the frataxin family.

In terms of biological role, involved in iron-sulfur (Fe-S) cluster assembly. May act as a regulator of Fe-S biogenesis. The chain is Iron-sulfur cluster assembly protein CyaY from Tolumonas auensis (strain DSM 9187 / NBRC 110442 / TA 4).